The chain runs to 195 residues: Peptidyl-tRNA hydrolase (195 aa).

Tyr17 contacts tRNA. His22 acts as the Proton acceptor in catalysis. Phe68, Asn70, and Asn116 together coordinate tRNA.

The protein belongs to the PTH family. In terms of assembly, monomer.

Its subcellular location is the cytoplasm. It catalyses the reaction an N-acyl-L-alpha-aminoacyl-tRNA + H2O = an N-acyl-L-amino acid + a tRNA + H(+). Functionally, hydrolyzes ribosome-free peptidyl-tRNAs (with 1 or more amino acids incorporated), which drop off the ribosome during protein synthesis, or as a result of ribosome stalling. In terms of biological role, catalyzes the release of premature peptidyl moieties from peptidyl-tRNA molecules trapped in stalled 50S ribosomal subunits, and thus maintains levels of free tRNAs and 50S ribosomes. In Pectobacterium atrosepticum (strain SCRI 1043 / ATCC BAA-672) (Erwinia carotovora subsp. atroseptica), this protein is Peptidyl-tRNA hydrolase.